Consider the following 602-residue polypeptide: Elongation factor 4 (602 aa).

Residues serine 7–alanine 189 form the tr-type G domain. Residues aspartate 19–threonine 24 and asparagine 136–aspartate 139 contribute to the GTP site.

The protein belongs to the TRAFAC class translation factor GTPase superfamily. Classic translation factor GTPase family. LepA subfamily.

The protein resides in the cell inner membrane. It carries out the reaction GTP + H2O = GDP + phosphate + H(+). Its function is as follows. Required for accurate and efficient protein synthesis under certain stress conditions. May act as a fidelity factor of the translation reaction, by catalyzing a one-codon backward translocation of tRNAs on improperly translocated ribosomes. Back-translocation proceeds from a post-translocation (POST) complex to a pre-translocation (PRE) complex, thus giving elongation factor G a second chance to translocate the tRNAs correctly. Binds to ribosomes in a GTP-dependent manner. The chain is Elongation factor 4 from Picosynechococcus sp. (strain ATCC 27264 / PCC 7002 / PR-6) (Agmenellum quadruplicatum).